Reading from the N-terminus, the 2174-residue chain is Spectinabilin polyketide synthase system protein NorB (2174 aa).

Positions 34–459 constitute a Ketosynthase family 3 (KS3) domain; sequence REPVAVVAMG…GTNAHVILEQ (426 aa). Catalysis depends on for beta-ketoacyl synthase activity residues C206, H341, and H381. The 322-residue stretch at 567–888 folds into the Malonyl-CoA:ACP transacylase (MAT) domain; that stretch reads FLFSGQGSQR…AAVSRAFVQG (322 aa). Positions 938 to 1060 are N-terminal hotdog fold; the sequence is HPLLGACLEL…GQLAPEAAAP (123 aa). One can recognise a PKS/mFAS DH domain in the interval 938-1212; sequence HPLLGACLEL…TRPITAGQLR (275 aa). The active-site Proton acceptor; for dehydratase activity is the H970. The segment at 1056 to 1075 is disordered; sequence EAAAPPAAPGEDWPPPGAEP. Over residues 1061 to 1074 the composition is skewed to pro residues; the sequence is PAAPGEDWPPPGAE. The segment at 1073–1212 is C-terminal hotdog fold; that stretch reads AEPVPLEGFY…TRPITAGQLR (140 aa). The Proton donor; for dehydratase activity role is filled by D1134. An Enoyl reductase (ER) domain is found at 1424 to 1726; sequence GTVDDLVLAP…QARNVGKLVL (303 aa). Residues 1736 to 1915 enclose the Ketoreductase (KR) domain; that stretch reads GTILVTGGYG…ATALAWGMWA (180 aa). One can recognise a Carrier domain in the interval 2017–2092; it reads PAVRELVRGQ…ALTDAIEARL (76 aa). S2052 carries the O-(pantetheine 4'-phosphoryl)serine modification.

The spectinabilin polyketide synthase complex is composed of 4 proteins, NorA, NorA', NorB and NorC. The complex comprises 6 modules with a total of 28 catalytic domains catalyzing 7 chain elongations. NorA comprises one module, NorA' two modules, NorB one module and NorC two modules. The cofactor is pantetheine 4'-phosphate.

The enzyme catalyses 4-nitrobenzoyl-CoA + 6 (S)-methylmalonyl-CoA + malonyl-CoA + 6 NADPH + 12 H(+) = demethyldeoxyspectinabilin + 7 CO2 + 6 NADP(+) + 8 CoA + 5 H2O. It functions in the pathway antibiotic biosynthesis. Its pathway is polyketide biosynthesis. Its function is as follows. Component of a type I modular polyketide synthase (PKS) that generates the backbone of the antibiotic spectinabilin (also known as neoaureothin), a nitroaryl-substituted polyketide metabolite. This PKS system accepts the unusual starter unit 4-nitrobenzoyl-CoA and extends it by 6 molecules of (S)-methylmalonyl-CoA and a single molecule of malonyl-CoA. The protein is Spectinabilin polyketide synthase system protein NorB of Streptomyces orinoci (Streptoverticillium orinoci).